Consider the following 354-residue polypeptide: Uroporphyrinogen decarboxylase (354 aa).

Residues 27 to 31 (RQAGR), Asp77, Tyr154, Thr209, and His327 contribute to the substrate site.

This sequence belongs to the uroporphyrinogen decarboxylase family. As to quaternary structure, homodimer.

It is found in the cytoplasm. The catalysed reaction is uroporphyrinogen III + 4 H(+) = coproporphyrinogen III + 4 CO2. The protein operates within porphyrin-containing compound metabolism; protoporphyrin-IX biosynthesis; coproporphyrinogen-III from 5-aminolevulinate: step 4/4. In terms of biological role, catalyzes the decarboxylation of four acetate groups of uroporphyrinogen-III to yield coproporphyrinogen-III. In Serratia proteamaculans (strain 568), this protein is Uroporphyrinogen decarboxylase.